A 363-amino-acid chain; its full sequence is Dioxygenase sphC (363 aa).

Residues His-183, Asp-185, and His-259 each contribute to the Fe cation site.

It belongs to the PhyH family. As to quaternary structure, homodimer. Fe cation serves as cofactor.

The enzyme catalyses sphingofungin B1 + 2-oxoglutarate + O2 = sphingofungin B + succinate + CO2. It functions in the pathway secondary metabolite biosynthesis. Its function is as follows. Dioxygenase; part of the gene cluster that mediates the biosynthesis of sphingofungins, bioactive molecules acting as sphingolipid inhibitors via inhibiting serine palmitoyl transferase (SPT). Within the pathway, sphC catalyzes the hydrolxylation at C-4 to convert sphingofungin B1 into sphingofungin B as well as presphingofungin into sphingofungin B2. Sphingofungin biosynthesis starts with the PKS sphB that produces an C18 polyketide precursor 3-hydroxyoctadeca-4,10-dienoyl-ACP containing one delta-6 desaturation and one delta-12 desaturation. The aminoacyl transferase sphA uses the sphB product to produce 3-keto-presphingofungin by adding an aminomalonate molecule. SphF then reduces the C-3 ketone of 3-keto-presphingofungin which leads to presphingofungin. The cytochrome P450 monooxygenase sphH converts presphingofungin into sphingofungin B1 which is further converted to sphingofungin B by the dioxygenase sphC. SphC is also able to convert presphingofungin into sphingofungin B2. The acetyltransferase sphE acetylates sphingofungin B to produce sphingofungin C, but can also convert sphingofungin B1 into sphingofungin C1 and sphingofungin B2 into sphingofungin C2. Finally, sphingofungin C can be spontaneously converted into sphingofungin D. The chain is Dioxygenase sphC from Aspergillus fumigatus (strain CBS 144.89 / FGSC A1163 / CEA10) (Neosartorya fumigata).